Here is a 126-residue protein sequence, read N- to C-terminus: MNIIQQYEADEIARLSAAREVPEFGPGDTVRVSVRVVEGERKRIQAYEGVVIARSNKGLNSNFTVRKISNGEGVERVFPLYAPTIAEIKVVRRGAVRRAKLYYLRGRRGKSARIAERARETVSAEA.

Belongs to the bacterial ribosomal protein bL19 family.

In terms of biological role, this protein is located at the 30S-50S ribosomal subunit interface and may play a role in the structure and function of the aminoacyl-tRNA binding site. This Gluconacetobacter diazotrophicus (strain ATCC 49037 / DSM 5601 / CCUG 37298 / CIP 103539 / LMG 7603 / PAl5) protein is Large ribosomal subunit protein bL19.